Here is a 523-residue protein sequence, read N- to C-terminus: Bifunctional purine biosynthesis protein PurH (523 aa).

One can recognise an MGS-like domain in the interval 1 to 150; the sequence is MSDVVPVRNA…KNHGDVAIAT (150 aa).

The protein belongs to the PurH family.

It carries out the reaction (6R)-10-formyltetrahydrofolate + 5-amino-1-(5-phospho-beta-D-ribosyl)imidazole-4-carboxamide = 5-formamido-1-(5-phospho-D-ribosyl)imidazole-4-carboxamide + (6S)-5,6,7,8-tetrahydrofolate. The enzyme catalyses IMP + H2O = 5-formamido-1-(5-phospho-D-ribosyl)imidazole-4-carboxamide. It functions in the pathway purine metabolism; IMP biosynthesis via de novo pathway; 5-formamido-1-(5-phospho-D-ribosyl)imidazole-4-carboxamide from 5-amino-1-(5-phospho-D-ribosyl)imidazole-4-carboxamide (10-formyl THF route): step 1/1. It participates in purine metabolism; IMP biosynthesis via de novo pathway; IMP from 5-formamido-1-(5-phospho-D-ribosyl)imidazole-4-carboxamide: step 1/1. The protein is Bifunctional purine biosynthesis protein PurH of Rhodopirellula baltica (strain DSM 10527 / NCIMB 13988 / SH1).